We begin with the raw amino-acid sequence, 1241 residues long: High-affinity potassium transport protein (1241 aa).

A run of 2 helical transmembrane segments spans residues 49-70 and 78-98; these read NFIA…ILLY and IDAL…TVDV. N-linked (GlcNAc...) asparagine glycosylation is present at asparagine 100. A helical transmembrane segment spans residues 107–127; sequence IILYIICCISTPIAVHSCLAF. Disordered stretches follow at residues 162 to 241, 253 to 316, and 329 to 570; these read TART…SLDD, KYHG…TPED, and EGTA…QLQQ. A compositionally biased stretch (polar residues) spans 164–177; it reads RTMTKSKTGGTQRV. Basic and acidic residues-rich tracts occupy residues 181-191 and 199-214; these read GKSDKRDDFQE and VNRD…HNSR. Low complexity predominate over residues 215–238; that stretch reads DSNSNANTNSSNNNSINHNGSSGS. N-linked (GlcNAc...) asparagine glycans are attached at residues asparagine 223, asparagine 227, asparagine 233, asparagine 257, asparagine 274, asparagine 353, and asparagine 364. Polar residues-rich tracts occupy residues 268–280 and 345–365; these read NTAT…QKLK and TDGT…TMNE. Residues 366-375 are compositionally biased toward basic and acidic residues; it reads SKIRIQDKGA. Residues 380-411 show a composition bias toward polar residues; that stretch reads DQDSVLHSSNSSACTSDEDSLPTNFGGTTPSL. Residues asparagine 389 and asparagine 442 are each glycosylated (N-linked (GlcNAc...) asparagine). Composition is skewed to basic residues over residues 446 to 455 and 482 to 497; these read PPRKASKSKR and HLPK…KRRL. A compositionally biased stretch (polar residues) spans 498-509; the sequence is STGSIDKNSSSD. Asparagine 505 and asparagine 538 each carry an N-linked (GlcNAc...) asparagine glycan. A compositionally biased stretch (acidic residues) spans 520–545; the sequence is NDDDDGNEGDNMEEYFADNESGDEDD. A compositionally biased stretch (low complexity) spans 561 to 570; it reads KQQQQHQLQQ. N-linked (GlcNAc...) asparagine glycans are attached at residues asparagine 584, asparagine 660, asparagine 681, asparagine 691, and asparagine 741. The segment at 677-714 is disordered; that stretch reads NSHRNGSEDVSSDSNETTYPLNGNNDHSQNDANGYPTY. Over residues 684-708 the composition is skewed to polar residues; the sequence is EDVSSDSNETTYPLNGNNDHSQNDA. The next 5 helical transmembrane spans lie at 784-806, 819-840, 844-864, 868-888, and 904-924; these read ILVV…WINL, VSPT…GLTL, SMMS…FIII, GFPI…PDLS, and CFTL…LVGL. A glycan (N-linked (GlcNAc...) asparagine) is linked at asparagine 925. 2 helical membrane-spanning segments follow: residues 929–949 and 977–997; these read WILF…SKGY and SIQV…AISI. Residues 1011-1073 form a disordered region; that stretch reads YGEMGGKPED…ENENPNEEST (63 aa). The span at 1021–1041 shows a compositional bias: acidic residues; that stretch reads TDTEEDGDCDDEDDDNEEEES. Residues 1050–1062 show a composition bias toward basic residues; that stretch reads GKSKKETKKKKKR. The next 2 membrane-spanning stretches (helical) occupy residues 1084-1104 and 1117-1137; these read QLSF…ICER and VFTI…SLGY. Asparagine 1141 carries N-linked (GlcNAc...) asparagine glycosylation. Positions 1222–1241 are disordered; that stretch reads DELKHKRSLSRSSKRSTKTN. Positions 1226–1241 are enriched in basic residues; sequence HKRSLSRSSKRSTKTN.

It belongs to the TrkH potassium transport family.

The protein localises to the membrane. Its function is as follows. This protein is required for high-affinity potassium transport. This Saccharomyces uvarum (Yeast) protein is High-affinity potassium transport protein (TRK1).